The sequence spans 208 residues: Large ribosomal subunit protein uL4 (208 aa).

A disordered region spans residues 58-77 (RGGGRKPWRQKGTGRARQGS). Over residues 60–71 (GGRKPWRQKGTG) the composition is skewed to basic residues.

This sequence belongs to the universal ribosomal protein uL4 family. Part of the 50S ribosomal subunit.

One of the primary rRNA binding proteins, this protein initially binds near the 5'-end of the 23S rRNA. It is important during the early stages of 50S assembly. It makes multiple contacts with different domains of the 23S rRNA in the assembled 50S subunit and ribosome. Functionally, forms part of the polypeptide exit tunnel. The protein is Large ribosomal subunit protein uL4 of Caldicellulosiruptor saccharolyticus (strain ATCC 43494 / DSM 8903 / Tp8T 6331).